A 439-amino-acid polypeptide reads, in one-letter code: MKGWLQQHKPTARRSLSRHLIGVSVLALALVAGVGGWAATTELSSAIVAGGVVIVDDNVKKVQHLTGGIVGELLVKEGDRVEAGQVLIRLDGTTVRANLAIIESTLAQFYARRARLQAERMGAASFEIEEDLAEFIPGTAAAKLIEGEQRLFASRRSALSGMKGQLDSRKAQLADEVEGLTVQLNAIEEALKLIAEELTGVDSLFGQGLVPMQRVTTLKRQRAELEGGRGRHIAARAQARGKSSEIDLQILQLDEDRRSEISKELTDVEAKIAEYEERRTAATDQLRRLDITAPLSGRIYQLAIHTVNGVINPGETLMLVVPEAEDLTVEAKVATHDIDQIRVGQSVEIRFSAFNQRTTPEVEAEVVTVAPDLVTDERTGASYYPLRIRPKAESLAKLKGLSLYPGMPAEVFIKIADRTVISYLTKPLTDQMRHAFRED.

A helical transmembrane segment spans residues 20–40; it reads LIGVSVLALALVAGVGGWAAT.

It belongs to the membrane fusion protein (MFP) (TC 8.A.1) family. As to quaternary structure, part of a type I secretion system composed of PrsD and PrsE.

Its subcellular location is the cell inner membrane. In terms of biological role, mediates secretion of glycanase ExsH. The sequence is that of Type I secretion system membrane fusion protein PrsE (prsE) from Rhizobium meliloti (strain 1021) (Ensifer meliloti).